Consider the following 307-residue polypeptide: Methionyl-tRNA formyltransferase (307 aa).

Residue serine 109–proline 112 participates in (6S)-5,6,7,8-tetrahydrofolate binding.

It belongs to the Fmt family.

It carries out the reaction L-methionyl-tRNA(fMet) + (6R)-10-formyltetrahydrofolate = N-formyl-L-methionyl-tRNA(fMet) + (6S)-5,6,7,8-tetrahydrofolate + H(+). In terms of biological role, attaches a formyl group to the free amino group of methionyl-tRNA(fMet). The formyl group appears to play a dual role in the initiator identity of N-formylmethionyl-tRNA by promoting its recognition by IF2 and preventing the misappropriation of this tRNA by the elongation apparatus. The protein is Methionyl-tRNA formyltransferase of Mycobacteroides abscessus (strain ATCC 19977 / DSM 44196 / CCUG 20993 / CIP 104536 / JCM 13569 / NCTC 13031 / TMC 1543 / L948) (Mycobacterium abscessus).